Consider the following 86-residue polypeptide: Small ribosomal subunit protein bS20 (86 aa).

The segment at 1–27 (MANNKSAKKRAIQAEKRRQHNASRRSM) is disordered.

The protein belongs to the bacterial ribosomal protein bS20 family.

In terms of biological role, binds directly to 16S ribosomal RNA. The chain is Small ribosomal subunit protein bS20 from Vibrio vulnificus (strain CMCP6).